The primary structure comprises 521 residues: Glutamate--cysteine ligase (521 aa).

The protein belongs to the glutamate--cysteine ligase type 1 family. Type 1 subfamily.

The enzyme catalyses L-cysteine + L-glutamate + ATP = gamma-L-glutamyl-L-cysteine + ADP + phosphate + H(+). It participates in sulfur metabolism; glutathione biosynthesis; glutathione from L-cysteine and L-glutamate: step 1/2. The chain is Glutamate--cysteine ligase (gshA) from Buchnera aphidicola subsp. Baizongia pistaciae (strain Bp).